The primary structure comprises 218 residues: Deoxyribose-phosphate aldolase (218 aa).

The active-site Proton donor/acceptor is the Asp92. The Schiff-base intermediate with acetaldehyde role is filled by Lys156. The active-site Proton donor/acceptor is the Lys185.

This sequence belongs to the DeoC/FbaB aldolase family. DeoC type 1 subfamily.

Its subcellular location is the cytoplasm. It carries out the reaction 2-deoxy-D-ribose 5-phosphate = D-glyceraldehyde 3-phosphate + acetaldehyde. It functions in the pathway carbohydrate degradation; 2-deoxy-D-ribose 1-phosphate degradation; D-glyceraldehyde 3-phosphate and acetaldehyde from 2-deoxy-alpha-D-ribose 1-phosphate: step 2/2. In terms of biological role, catalyzes a reversible aldol reaction between acetaldehyde and D-glyceraldehyde 3-phosphate to generate 2-deoxy-D-ribose 5-phosphate. This chain is Deoxyribose-phosphate aldolase, found in Desulfitobacterium hafniense (strain DSM 10664 / DCB-2).